Consider the following 366-residue polypeptide: Peptide chain release factor 2 (366 aa).

Position 246 is an N5-methylglutamine (Q246).

It belongs to the prokaryotic/mitochondrial release factor family. Methylated by PrmC. Methylation increases the termination efficiency of RF2.

It localises to the cytoplasm. Functionally, peptide chain release factor 2 directs the termination of translation in response to the peptide chain termination codons UGA and UAA. This Frankia casuarinae (strain DSM 45818 / CECT 9043 / HFP020203 / CcI3) protein is Peptide chain release factor 2.